The chain runs to 116 residues: Flagellar transcriptional regulator FlhD (116 aa).

This sequence belongs to the FlhD family. As to quaternary structure, homodimer; disulfide-linked. Forms a heterohexamer composed of two FlhC and four FlhD subunits. Each FlhC binds a FlhD dimer, forming a heterotrimer, and a hexamer assembles by dimerization of two heterotrimers.

Its subcellular location is the cytoplasm. In terms of biological role, functions in complex with FlhC as a master transcriptional regulator that regulates transcription of several flagellar and non-flagellar operons by binding to their promoter region. Activates expression of class 2 flagellar genes, including fliA, which is a flagellum-specific sigma factor that turns on the class 3 genes. Also regulates genes whose products function in a variety of physiological pathways. This chain is Flagellar transcriptional regulator FlhD, found in Xenorhabdus nematophila (Achromobacter nematophilus).